A 375-amino-acid chain; its full sequence is Succinyl-diaminopimelate desuccinylase (375 aa).

Position 66 (H66) interacts with Zn(2+). D68 is a catalytic residue. A Zn(2+)-binding site is contributed by D99. The Proton acceptor role is filled by E133. Residues E134, E162, and H348 each coordinate Zn(2+).

This sequence belongs to the peptidase M20A family. DapE subfamily. Homodimer. Zn(2+) serves as cofactor. Co(2+) is required as a cofactor.

The enzyme catalyses N-succinyl-(2S,6S)-2,6-diaminopimelate + H2O = (2S,6S)-2,6-diaminopimelate + succinate. It participates in amino-acid biosynthesis; L-lysine biosynthesis via DAP pathway; LL-2,6-diaminopimelate from (S)-tetrahydrodipicolinate (succinylase route): step 3/3. Catalyzes the hydrolysis of N-succinyl-L,L-diaminopimelic acid (SDAP), forming succinate and LL-2,6-diaminopimelate (DAP), an intermediate involved in the bacterial biosynthesis of lysine and meso-diaminopimelic acid, an essential component of bacterial cell walls. The sequence is that of Succinyl-diaminopimelate desuccinylase from Aeromonas salmonicida (strain A449).